A 137-amino-acid chain; its full sequence is Small ribosomal subunit protein uS12 (137 aa).

Asp89 carries the post-translational modification 3-methylthioaspartic acid. The tract at residues 105-137 is disordered; it reads AGVAGRTQRRSKYGAKRPKAGQAAAPAKGKGKK. Basic residues predominate over residues 111 to 123; it reads TQRRSKYGAKRPK. Positions 124–137 are enriched in low complexity; the sequence is AGQAAAPAKGKGKK.

This sequence belongs to the universal ribosomal protein uS12 family. In terms of assembly, part of the 30S ribosomal subunit. Contacts proteins S8 and S17. May interact with IF1 in the 30S initiation complex.

In terms of biological role, with S4 and S5 plays an important role in translational accuracy. Interacts with and stabilizes bases of the 16S rRNA that are involved in tRNA selection in the A site and with the mRNA backbone. Located at the interface of the 30S and 50S subunits, it traverses the body of the 30S subunit contacting proteins on the other side and probably holding the rRNA structure together. The combined cluster of proteins S8, S12 and S17 appears to hold together the shoulder and platform of the 30S subunit. The sequence is that of Small ribosomal subunit protein uS12 from Phocaeicola vulgatus (strain ATCC 8482 / DSM 1447 / JCM 5826 / CCUG 4940 / NBRC 14291 / NCTC 11154) (Bacteroides vulgatus).